The sequence spans 374 residues: Alanine racemase (374 aa).

Lys34 acts as the Proton acceptor; specific for D-alanine in catalysis. Lys34 is modified (N6-(pyridoxal phosphate)lysine). Arg138 lines the substrate pocket. Residue Tyr265 is the Proton acceptor; specific for L-alanine of the active site. Met313 serves as a coordination point for substrate.

This sequence belongs to the alanine racemase family. The cofactor is pyridoxal 5'-phosphate.

The enzyme catalyses L-alanine = D-alanine. It participates in amino-acid biosynthesis; D-alanine biosynthesis; D-alanine from L-alanine: step 1/1. Its function is as follows. Catalyzes the interconversion of L-alanine and D-alanine. May also act on other amino acids. The sequence is that of Alanine racemase (alr) from Hahella chejuensis (strain KCTC 2396).